The sequence spans 552 residues: Rqc2 homolog RqcH (552 aa).

Coiled-coil stretches lie at residues 271-317 (RDRV…QKGE) and 357-398 (NAQR…MLGQ).

This sequence belongs to the NEMF family. In terms of assembly, associates with stalled 50S ribosomal subunits, binds to RqcH. Recombinant protein interacts with the N-terminal 30 kDa of human fibronectin (FN1).

Key component of the ribosome quality control system (RQC), a ribosome-associated complex that mediates the extraction of incompletely synthesized nascent chains from stalled ribosomes and their subsequent degradation. RqcH recruits Ala-charged tRNA, and with RqcP directs the elongation of stalled nascent chains on 50S ribosomal subunits, leading to non-templated C-terminal alanine extensions (Ala tail). The Ala tail promotes nascent chain degradation. May add between 1 and at least 8 Ala residues. Binds to stalled 50S ribosomal subunits. This Streptococcus suis (strain 05ZYH33) protein is Rqc2 homolog RqcH.